A 158-amino-acid chain; its full sequence is Transcription elongation factor GreA (158 aa).

Belongs to the GreA/GreB family.

Its function is as follows. Necessary for efficient RNA polymerase transcription elongation past template-encoded arresting sites. The arresting sites in DNA have the property of trapping a certain fraction of elongating RNA polymerases that pass through, resulting in locked ternary complexes. Cleavage of the nascent transcript by cleavage factors such as GreA or GreB allows the resumption of elongation from the new 3'terminus. GreA releases sequences of 2 to 3 nucleotides. This is Transcription elongation factor GreA from Rhizobium leguminosarum bv. trifolii (strain WSM2304).